Here is a 292-residue protein sequence, read N- to C-terminus: Ribosomal protein L11 methyltransferase (292 aa).

4 residues coordinate S-adenosyl-L-methionine: Thr-136, Gly-159, Asp-181, and Asn-228.

Belongs to the methyltransferase superfamily. PrmA family.

It is found in the cytoplasm. It catalyses the reaction L-lysyl-[protein] + 3 S-adenosyl-L-methionine = N(6),N(6),N(6)-trimethyl-L-lysyl-[protein] + 3 S-adenosyl-L-homocysteine + 3 H(+). Its function is as follows. Methylates ribosomal protein L11. The protein is Ribosomal protein L11 methyltransferase of Rhizobium etli (strain ATCC 51251 / DSM 11541 / JCM 21823 / NBRC 15573 / CFN 42).